The chain runs to 289 residues: Acetyl-coenzyme A carboxylase carboxyl transferase subunit beta (289 aa).

The CoA carboxyltransferase N-terminal domain occupies 34 to 289 (MWVKCNKCGE…KLINMHKNSF (256 aa)). Residues Cys38, Cys41, Cys57, and Cys60 each coordinate Zn(2+). A C4-type zinc finger spans residues 38–60 (CNKCGEILYQNDLEKNYMACNLC).

Belongs to the AccD/PCCB family. In terms of assembly, acetyl-CoA carboxylase is a heterohexamer composed of biotin carboxyl carrier protein (AccB), biotin carboxylase (AccC) and two subunits each of ACCase subunit alpha (AccA) and ACCase subunit beta (AccD). Zn(2+) is required as a cofactor.

It is found in the cytoplasm. The enzyme catalyses N(6)-carboxybiotinyl-L-lysyl-[protein] + acetyl-CoA = N(6)-biotinyl-L-lysyl-[protein] + malonyl-CoA. It participates in lipid metabolism; malonyl-CoA biosynthesis; malonyl-CoA from acetyl-CoA: step 1/1. In terms of biological role, component of the acetyl coenzyme A carboxylase (ACC) complex. Biotin carboxylase (BC) catalyzes the carboxylation of biotin on its carrier protein (BCCP) and then the CO(2) group is transferred by the transcarboxylase to acetyl-CoA to form malonyl-CoA. The sequence is that of Acetyl-coenzyme A carboxylase carboxyl transferase subunit beta from Clostridium botulinum (strain Loch Maree / Type A3).